We begin with the raw amino-acid sequence, 226 residues long: Orotate phosphoribosyltransferase (226 aa).

5-phospho-alpha-D-ribose 1-diphosphate is bound by residues lysine 26, tyrosine 73 to lysine 74, arginine 100, lysine 101, lysine 104, histidine 106, and glutamate 128 to serine 136. Residues threonine 132 and arginine 161 each contribute to the orotate site.

The protein belongs to the purine/pyrimidine phosphoribosyltransferase family. PyrE subfamily. In terms of assembly, homodimer. It depends on Mg(2+) as a cofactor.

The catalysed reaction is orotidine 5'-phosphate + diphosphate = orotate + 5-phospho-alpha-D-ribose 1-diphosphate. The protein operates within pyrimidine metabolism; UMP biosynthesis via de novo pathway; UMP from orotate: step 1/2. In terms of biological role, catalyzes the transfer of a ribosyl phosphate group from 5-phosphoribose 1-diphosphate to orotate, leading to the formation of orotidine monophosphate (OMP). The polypeptide is Orotate phosphoribosyltransferase (Agathobacter rectalis (strain ATCC 33656 / DSM 3377 / JCM 17463 / KCTC 5835 / VPI 0990) (Eubacterium rectale)).